The chain runs to 230 residues: MSERAPVVTIDGPSGAGKGTISQLLAKHLGWQLLDSGAIYRVLALAAIHHDVELENEESITLLAAHLDVKFLTGNEKDPVQVILEGEDVTTAIRTQECSNAASKVAAFPRVREALLRRQRAFRTAPGLIADGRDMGTVVFPTASAKLYLTASAEERAQRRYNQLQDKGFDVNIERLLAEIIERDDRDMNRPVAPLVPAEDALVIDTSDKGIDEVLELALNYINQKLSNTN.

12–20 (GPSGAGKGT) contacts ATP.

Belongs to the cytidylate kinase family. Type 1 subfamily.

Its subcellular location is the cytoplasm. The catalysed reaction is CMP + ATP = CDP + ADP. The enzyme catalyses dCMP + ATP = dCDP + ADP. The protein is Cytidylate kinase of Shewanella sp. (strain MR-4).